An 823-amino-acid polypeptide reads, in one-letter code: Semaphorin-4B (823 aa).

A signal peptide spans M1–A30. Residues L31–E703 are Extracellular-facing. The 477-residue stretch at R34–V510 folds into the Sema domain. N-linked (GlcNAc...) asparagine glycosylation is found at N53, N56, and N83. Residues C107 and C118 are joined by a disulfide bond. The N-linked (GlcNAc...) asparagine glycan is linked to N129. 3 disulfides stabilise this stretch: C136–C145, C273–C386, and C297–C346. 2 N-linked (GlcNAc...) asparagine glycosylation sites follow: N397 and N512. The PSI domain occupies N512–K582. An intrachain disulfide couples C513 to C530. N-linked (GlcNAc...) asparagine glycosylation is found at N567, N615, and N680. Positions N589–F649 constitute an Ig-like C2-type domain. The cysteines at positions 596 and 642 are disulfide-linked. The helical transmembrane segment at F704–Y724 threads the bilayer. Residues R725 to V823 lie on the Cytoplasmic side of the membrane. A phosphoserine mark is found at S779, S780, S804, and S816.

The protein belongs to the semaphorin family. Interacts with GIPC PDZ domain.

Its subcellular location is the membrane. In terms of biological role, inhibits axonal extension by providing local signals to specify territories inaccessible for growing axons. The protein is Semaphorin-4B of Mus musculus (Mouse).